Consider the following 181-residue polypeptide: RING-H2 finger protein ATL56 (181 aa).

A disordered region spans residues 1 to 24 (MPPTNNYRISGEPPSTTPSHPPPK). Pro residues predominate over residues 15-24 (STTPSHPPPK). Residues 32 to 52 (LFLVGVIMFSIFFLFLVLIGI) traverse the membrane as a helical segment. Residues 110–152 (CVVCFDGFRQGQWCRNLPGCGHVFHRKCVDTWLLKASTCPICR) form an RING-type; atypical zinc finger.

The protein belongs to the RING-type zinc finger family. ATL subfamily.

It localises to the membrane. The enzyme catalyses S-ubiquitinyl-[E2 ubiquitin-conjugating enzyme]-L-cysteine + [acceptor protein]-L-lysine = [E2 ubiquitin-conjugating enzyme]-L-cysteine + N(6)-ubiquitinyl-[acceptor protein]-L-lysine.. It functions in the pathway protein modification; protein ubiquitination. This chain is RING-H2 finger protein ATL56 (ATL56), found in Arabidopsis thaliana (Mouse-ear cress).